The following is a 308-amino-acid chain: MVGLKPPEVPPTTAVKLLGAGTAACFADLLTFPLDTAKVRLQIQGENQAARSAQYRGVLGTILTMVRNEGPRSPYNGLVAGLQRQMSFASIRIGLYDSVKQLYTPKGSDHSSITTRILAGCTTGAMAVTCAQPTDVVKVRFQASIHAGPRSNRKYSGTMDAYRTIAREEGVRGLWKGILPNITRNAIVNCAEMVTYDVIKEKVLDYHLLTDNLPCHFVSAFGAGFCATVVASPVDVVKTRYMNSPPGQYQNPLDCMLKMVTQEGPTAFYKGFTPSFLRLGSWNVVMFVSYEQLKRALMKVQMLRESPF.

At 1-10 (MVGLKPPEVP) the chain is on the mitochondrial intermembrane side. Residues 11 to 32 (PTTAVKLLGAGTAACFADLLTF) traverse the membrane as a helical segment. Solcar repeat units follow at residues 11-102 (PTTA…VKQL), 111-202 (SSIT…IKEK), and 211-296 (DNLP…LKRA). Residues 33–73 (PLDTAKVRLQIQGENQAARSAQYRGVLGTILTMVRNEGPRS) are Mitochondrial matrix-facing. A helical transmembrane segment spans residues 74–96 (PYNGLVAGLQRQMSFASIRIGLY). Residues 97–116 (DSVKQLYTPKGSDHSSITTR) lie on the Mitochondrial intermembrane side of the membrane. A helical membrane pass occupies residues 117 to 133 (ILAGCTTGAMAVTCAQP). Over 134–179 (TDVVKVRFQASIHAGPRSNRKYSGTMDAYRTIAREEGVRGLWKGIL) the chain is Mitochondrial matrix. A helical membrane pass occupies residues 180–196 (PNITRNAIVNCAEMVTY). The Mitochondrial intermembrane portion of the chain corresponds to 197–213 (DVIKEKVLDYHLLTDNL). The chain crosses the membrane as a helical span at residues 214-233 (PCHFVSAFGAGFCATVVASP). At 234–267 (VDVVKTRYMNSPPGQYQNPLDCMLKMVTQEGPTA) the chain is on the mitochondrial matrix side. Residues 268-290 (FYKGFTPSFLRLGSWNVVMFVSY) traverse the membrane as a helical segment. The segment at 275 to 297 (SFLRLGSWNVVMFVSYEQLKRAL) is purine nucleotide binding. Residues 291–308 (EQLKRALMKVQMLRESPF) are Mitochondrial intermembrane-facing.

It belongs to the mitochondrial carrier (TC 2.A.29) family. In terms of assembly, interacts with HAX1; the interaction is direct and calcium-dependent.

The protein resides in the mitochondrion inner membrane. Putative transmembrane transporter that plays a role in mitochondrial metabolism via an as yet unclear mechanism. Originally, this mitochondrial protein was thought to act as a proton transmembrane transporter from the mitochondrial intermembrane space into the matrix, causing proton leaks through the inner mitochondrial membrane, thereby uncoupling mitochondrial membrane potential generation from ATP synthesis. However, this function is controversial and uncoupling may not be the function, or at least not the main function, but rather a consequence of more conventional metabolite transporter activity. The protein is Putative mitochondrial transporter UCP3 of Sus scrofa (Pig).